Reading from the N-terminus, the 277-residue chain is Pantothenate synthetase (277 aa).

26-33 (MGNLHEGH) is an ATP binding site. Catalysis depends on H33, which acts as the Proton donor. Q57 is a (R)-pantoate binding site. Q57 provides a ligand contact to beta-alanine. Residue 144 to 147 (GKKD) coordinates ATP. Q150 provides a ligand contact to (R)-pantoate. Residues G173 and 181–184 (LSSR) contribute to the ATP site.

This sequence belongs to the pantothenate synthetase family. In terms of assembly, homodimer.

Its subcellular location is the cytoplasm. It carries out the reaction (R)-pantoate + beta-alanine + ATP = (R)-pantothenate + AMP + diphosphate + H(+). The protein operates within cofactor biosynthesis; (R)-pantothenate biosynthesis; (R)-pantothenate from (R)-pantoate and beta-alanine: step 1/1. Its function is as follows. Catalyzes the condensation of pantoate with beta-alanine in an ATP-dependent reaction via a pantoyl-adenylate intermediate. This chain is Pantothenate synthetase, found in Chromobacterium violaceum (strain ATCC 12472 / DSM 30191 / JCM 1249 / CCUG 213 / NBRC 12614 / NCIMB 9131 / NCTC 9757 / MK).